A 118-amino-acid chain; its full sequence is Large ribosomal subunit protein uL18 (118 aa).

The tract at residues 1–25 is disordered; it reads MITKPDKNKVRQKRHRRVRGKLSGT. Residues 10–20 are compositionally biased toward basic residues; sequence VRQKRHRRVRG.

This sequence belongs to the universal ribosomal protein uL18 family. In terms of assembly, part of the 50S ribosomal subunit; part of the 5S rRNA/L5/L18/L25 subcomplex. Contacts the 5S and 23S rRNAs.

Its function is as follows. This is one of the proteins that bind and probably mediate the attachment of the 5S RNA into the large ribosomal subunit, where it forms part of the central protuberance. The polypeptide is Large ribosomal subunit protein uL18 (Streptococcus gordonii (strain Challis / ATCC 35105 / BCRC 15272 / CH1 / DL1 / V288)).